A 360-amino-acid polypeptide reads, in one-letter code: Membrane-bound lytic murein transglycosylase C (360 aa).

The signal sequence occupies residues 1-16 (MKKYLALALIAPLLVS). A lipid anchor (N-palmitoyl cysteine) is attached at cysteine 17. Cysteine 17 carries the S-diacylglycerol cysteine lipid modification.

It belongs to the transglycosylase Slt family.

The protein localises to the cell outer membrane. It catalyses the reaction Exolytic cleavage of the (1-&gt;4)-beta-glycosidic linkage between N-acetylmuramic acid (MurNAc) and N-acetylglucosamine (GlcNAc) residues in peptidoglycan, from either the reducing or the non-reducing ends of the peptidoglycan chains, with concomitant formation of a 1,6-anhydrobond in the MurNAc residue.. Functionally, murein-degrading enzyme. May play a role in recycling of muropeptides during cell elongation and/or cell division. This chain is Membrane-bound lytic murein transglycosylase C, found in Klebsiella pneumoniae subsp. pneumoniae (strain ATCC 700721 / MGH 78578).